Reading from the N-terminus, the 293-residue chain is 4-hydroxy-tetrahydrodipicolinate synthase (293 aa).

Thr-47 contacts pyruvate. Tyr-135 (proton donor/acceptor) is an active-site residue. The Schiff-base intermediate with substrate role is filled by Lys-163. Residue Val-205 participates in pyruvate binding.

It belongs to the DapA family. As to quaternary structure, homotetramer; dimer of dimers.

Its subcellular location is the cytoplasm. The enzyme catalyses L-aspartate 4-semialdehyde + pyruvate = (2S,4S)-4-hydroxy-2,3,4,5-tetrahydrodipicolinate + H2O + H(+). The protein operates within amino-acid biosynthesis; L-lysine biosynthesis via DAP pathway; (S)-tetrahydrodipicolinate from L-aspartate: step 3/4. Catalyzes the condensation of (S)-aspartate-beta-semialdehyde [(S)-ASA] and pyruvate to 4-hydroxy-tetrahydrodipicolinate (HTPA). This chain is 4-hydroxy-tetrahydrodipicolinate synthase, found in Methylibium petroleiphilum (strain ATCC BAA-1232 / LMG 22953 / PM1).